We begin with the raw amino-acid sequence, 174 residues long: MLKYGTPFNFSRWIDEHAHLLKPPVGNQQVWQDSDFIVTVVGGPNHRTDYHDDPFEEFFYQLRGNAYLHLWIDGKRERVDLKEGDMFLLPPHVRHSPQRPEAGSACLVIERQRPAGVVDGFEWYCDACGHLVHRVEVQLKSIVDDLPPLFDAFYASDTLRRCAHCGHMHPGKAT.

Arginine 47 provides a ligand contact to O2. 3 residues coordinate Fe cation: histidine 51, glutamate 57, and histidine 95. Glutamate 57 contacts substrate. Substrate is bound by residues arginine 99 and glutamate 110. Residues cysteine 125, cysteine 128, cysteine 162, and cysteine 165 each coordinate Fe cation.

This sequence belongs to the 3-HAO family. Homodimer. The cofactor is Fe(2+).

The enzyme catalyses 3-hydroxyanthranilate + O2 = (2Z,4Z)-2-amino-3-carboxymuconate 6-semialdehyde. Its pathway is cofactor biosynthesis; NAD(+) biosynthesis; quinolinate from L-kynurenine: step 3/3. Its function is as follows. Catalyzes the oxidative ring opening of 3-hydroxyanthranilate to 2-amino-3-carboxymuconate semialdehyde, which spontaneously cyclizes to quinolinate. The sequence is that of 3-hydroxyanthranilate 3,4-dioxygenase from Burkholderia lata (strain ATCC 17760 / DSM 23089 / LMG 22485 / NCIMB 9086 / R18194 / 383).